The primary structure comprises 803 residues: Phenylalanine--tRNA ligase beta subunit (803 aa).

A tRNA-binding domain is found at 40 to 153 (ASLDRRIVVG…SSWEIGKPFA (114 aa)). The B5 domain occupies 400-476 (ADLQLLALRP…RLYGYNAIES (77 aa)). Residues Asp-454, Asp-460, Glu-463, and Glu-464 each coordinate Mg(2+). The 93-residue stretch at 709-801 (SRFPVVERDI…AESKLGAVIR (93 aa)) folds into the FDX-ACB domain.

This sequence belongs to the phenylalanyl-tRNA synthetase beta subunit family. Type 1 subfamily. As to quaternary structure, tetramer of two alpha and two beta subunits. The cofactor is Mg(2+).

It localises to the cytoplasm. It catalyses the reaction tRNA(Phe) + L-phenylalanine + ATP = L-phenylalanyl-tRNA(Phe) + AMP + diphosphate + H(+). In Chlorobium chlorochromatii (strain CaD3), this protein is Phenylalanine--tRNA ligase beta subunit.